A 213-amino-acid chain; its full sequence is MNIMLLGAPGCGKGTQAEQLVNKLNFIQVSTGDLMRKEISLNTTLGLKCQEYMNAGKYVPDQIVNQIVNQFLQYNNDKLIFDGYPRTLEQAKSLEKMLDLYNKKIDYVFYIDVNEQILIKRITNRLVCPLCKASFNLETRKPKQEGLCDFDNTKLVKRSDDSLDKVKIRLQTYKEQTLPLIDYFKTNSKFIEIKADNLSAEQVFNQIKGELKI.

10–15 (GCGKGT) is an ATP binding site. The NMP stretch occupies residues 30-59 (STGDLMRKEISLNTTLGLKCQEYMNAGKYV). AMP is bound by residues Thr31, Arg36, 57-59 (KYV), 83-86 (GYPR), and Gln90. The LID stretch occupies residues 124-161 (NRLVCPLCKASFNLETRKPKQEGLCDFDNTKLVKRSDD). Arg125 serves as a coordination point for ATP. Zn(2+)-binding residues include Cys128 and Cys131. ATP is bound at residue 134-135 (SF). Zn(2+)-binding residues include Cys148 and Asp151. Positions 158 and 169 each coordinate AMP. Asn197 contacts ATP.

This sequence belongs to the adenylate kinase family. Monomer.

It localises to the cytoplasm. It carries out the reaction AMP + ATP = 2 ADP. It functions in the pathway purine metabolism; AMP biosynthesis via salvage pathway; AMP from ADP: step 1/1. Functionally, catalyzes the reversible transfer of the terminal phosphate group between ATP and AMP. Plays an important role in cellular energy homeostasis and in adenine nucleotide metabolism. This is Adenylate kinase from Mycoplasma capricolum subsp. capricolum (strain California kid / ATCC 27343 / NCTC 10154).